A 337-amino-acid chain; its full sequence is Ketol-acid reductoisomerase (NADP(+)) (337 aa).

One can recognise a KARI N-terminal Rossmann domain in the interval 3 to 183 (IDVFYDDDAD…GGGRAGVIPT (181 aa)). NADP(+) is bound by residues 26 to 29 (YGSQ), Arg-49, Ser-52, Ser-54, and 84 to 87 (DTSQ). The active site involves His-109. Gly-135 contributes to the NADP(+) binding site. Residues 184 to 329 (TFEAETVTDL…EKLRDLMSWV (146 aa)) enclose the KARI C-terminal knotted domain. The Mg(2+) site is built by Asp-192, Glu-196, Glu-228, and Glu-232. A substrate-binding site is contributed by Ser-253.

The protein belongs to the ketol-acid reductoisomerase family. Requires Mg(2+) as cofactor.

The enzyme catalyses (2R)-2,3-dihydroxy-3-methylbutanoate + NADP(+) = (2S)-2-acetolactate + NADPH + H(+). It carries out the reaction (2R,3R)-2,3-dihydroxy-3-methylpentanoate + NADP(+) = (S)-2-ethyl-2-hydroxy-3-oxobutanoate + NADPH + H(+). It functions in the pathway amino-acid biosynthesis; L-isoleucine biosynthesis; L-isoleucine from 2-oxobutanoate: step 2/4. The protein operates within amino-acid biosynthesis; L-valine biosynthesis; L-valine from pyruvate: step 2/4. In terms of biological role, involved in the biosynthesis of branched-chain amino acids (BCAA). Catalyzes an alkyl-migration followed by a ketol-acid reduction of (S)-2-acetolactate (S2AL) to yield (R)-2,3-dihydroxy-isovalerate. In the isomerase reaction, S2AL is rearranged via a Mg-dependent methyl migration to produce 3-hydroxy-3-methyl-2-ketobutyrate (HMKB). In the reductase reaction, this 2-ketoacid undergoes a metal-dependent reduction by NADPH to yield (R)-2,3-dihydroxy-isovalerate. The polypeptide is Ketol-acid reductoisomerase (NADP(+)) (Corynebacterium urealyticum (strain ATCC 43042 / DSM 7109)).